The chain runs to 172 residues: Ribosome maturation factor RimM (172 aa).

Positions 95–168 (DEGEFYYHQI…RVDVAIMEGL (74 aa)) constitute a PRC barrel domain.

This sequence belongs to the RimM family. Binds ribosomal protein uS19.

Its subcellular location is the cytoplasm. Functionally, an accessory protein needed during the final step in the assembly of 30S ribosomal subunit, possibly for assembly of the head region. Essential for efficient processing of 16S rRNA. May be needed both before and after RbfA during the maturation of 16S rRNA. It has affinity for free ribosomal 30S subunits but not for 70S ribosomes. This Streptococcus uberis (strain ATCC BAA-854 / 0140J) protein is Ribosome maturation factor RimM.